Here is a 23-residue protein sequence, read N- to C-terminus: Basic phospholipase A2 mangshantoxin (23 aa).

Belongs to the phospholipase A2 family. Group II subfamily. Ca(2+) serves as cofactor. Contains 7 disulfide bonds. In terms of tissue distribution, expressed by the venom gland.

It is found in the secreted. The catalysed reaction is a 1,2-diacyl-sn-glycero-3-phosphocholine + H2O = a 1-acyl-sn-glycero-3-phosphocholine + a fatty acid + H(+). Its function is as follows. Snake venom phospholipase A2 (PLA2) that displays presynaptic neurotoxicity. PLA2 catalyzes the calcium-dependent hydrolysis of the 2-acyl groups in 3-sn-phosphoglycerides. In Protobothrops mangshanensis (Mangshan pitviper), this protein is Basic phospholipase A2 mangshantoxin.